The following is a 207-amino-acid chain: Small ribosomal subunit protein uS4 (207 aa).

A compositionally biased stretch (basic and acidic residues) spans 29–38 (QDKAKFDSKP). Residues 29-54 (QDKAKFDSKPGQHGRTSGQRTSDYGL) form a disordered region. Residues 42 to 52 (GRTSGQRTSDY) are compositionally biased toward polar residues. The region spanning 97-160 (SRLDNVVYRM…KKQTRIAEAL (64 aa)) is the S4 RNA-binding domain.

Belongs to the universal ribosomal protein uS4 family. Part of the 30S ribosomal subunit. Contacts protein S5. The interaction surface between S4 and S5 is involved in control of translational fidelity.

One of the primary rRNA binding proteins, it binds directly to 16S rRNA where it nucleates assembly of the body of the 30S subunit. In terms of biological role, with S5 and S12 plays an important role in translational accuracy. The protein is Small ribosomal subunit protein uS4 of Variovorax paradoxus (strain S110).